A 470-amino-acid polypeptide reads, in one-letter code: Uronate isomerase (470 aa).

This sequence belongs to the metallo-dependent hydrolases superfamily. Uronate isomerase family.

The enzyme catalyses D-glucuronate = D-fructuronate. It carries out the reaction aldehydo-D-galacturonate = keto-D-tagaturonate. It functions in the pathway carbohydrate metabolism; pentose and glucuronate interconversion. In Serratia proteamaculans (strain 568), this protein is Uronate isomerase.